Here is a 546-residue protein sequence, read N- to C-terminus: Protein RDR1 (546 aa).

Residues 20–46 constitute a DNA-binding region (zn(2)-C6 fungal-type); that stretch reads CVPCRERKRKCNGKSPCEMCVAYGYVC.

The protein localises to the nucleus. Transcriptional repressor of multidrug resistance genes, such as PDR5. Required for growth on non-fermentable carbon sources like lactate or glycerol. The chain is Protein RDR1 (RDR1) from Saccharomyces cerevisiae (strain ATCC 204508 / S288c) (Baker's yeast).